The primary structure comprises 334 residues: Cytochrome c oxidase assembly protein COX18, mitochondrial (334 aa).

A helical membrane pass occupies residues 168–188 (FKATVLVWIQLPMWIFMSFAL). Residues 189 to 224 (RNLSTGAAHSEAGFSVEEQLAAGGILWFSDLTAPDP) lie on the Mitochondrial matrix side of the membrane. The chain crosses the membrane as a helical span at residues 225–245 (TWILPVSLGVINLLIVEICVL). At 246–263 (QKIGMSRFQTYITYFVRA) the chain is on the mitochondrial intermembrane side. A helical membrane pass occupies residues 264-284 (MSVLMIPIAATVPSSIVLYWL). Over 285–334 (CSSFVGLSQNLLLRSPGFRQLCRIPSTKSDSETPYKDIFAAFNTKFISRK) the chain is Mitochondrial matrix.

The protein belongs to the OXA1/ALB3/YidC family. In terms of assembly, found in a complex with TMEM177, COA6, MT-CO2/COX2, COX20, SCO1 and SCO2. Interacts transiently with MT-CO2/COX2 during its maturation. Interacts with COX20 in a MT-CO2/COX2-dependent manner.

It localises to the mitochondrion inner membrane. In terms of biological role, mitochondrial membrane insertase required for the translocation of the C-terminus of cytochrome c oxidase subunit II (MT-CO2/COX2) across the mitochondrial inner membrane. Plays a role in MT-CO2/COX2 maturation following the COX20-mediated stabilization of newly synthesized MT-CO2/COX2 protein and before the action of the metallochaperones SCO1/2. Essential for the assembly and stability of the mitochondrial respiratory chain complex IV (also known as cytochrome c oxidase). This is Cytochrome c oxidase assembly protein COX18, mitochondrial (COX18) from Pongo abelii (Sumatran orangutan).